The chain runs to 286 residues: MRRDDNWFTEVLEEEGMAFSLRVREKLHEERTAFQHIEVYETEAWGRLLVIDGCVMLTSRDNFVYHEMMSHPALFTHPDPRRVAIIGGGDCGMLREVLKHPGIESVVQVDIDAGVTRAAERYFPELTEANDDPRATLLFDDGVAWIQDQPAGSLDVVIVDSTDPVGVAEGLFGPGFLGQVYRVLGDQGLMVQQSESPILHRDTILERLHGHMRGSGFAPVVTLPYPVVSYPSGWWSATLASKGPHPAAFRESDARAKAFATLYYNADIHRAALAAPEFCKGLLTDQ.

The 238-residue stretch at 5–242 (DNWFTEVLEE…GWWSATLASK (238 aa)) folds into the PABS domain. S-methyl-5'-thioadenosine is bound at residue glutamine 35. Residues histidine 66 and aspartate 90 each coordinate spermidine. Residues aspartate 110 and 141-142 (DG) contribute to the S-methyl-5'-thioadenosine site. Catalysis depends on aspartate 160, which acts as the Proton acceptor. Residue 160–163 (DSTD) coordinates spermidine.

The protein belongs to the spermidine/spermine synthase family. As to quaternary structure, homodimer or homotetramer.

It localises to the cytoplasm. The enzyme catalyses S-adenosyl 3-(methylsulfanyl)propylamine + putrescine = S-methyl-5'-thioadenosine + spermidine + H(+). Its pathway is amine and polyamine biosynthesis; spermidine biosynthesis; spermidine from putrescine: step 1/1. In terms of biological role, catalyzes the irreversible transfer of a propylamine group from the amino donor S-adenosylmethioninamine (decarboxy-AdoMet) to putrescine (1,4-diaminobutane) to yield spermidine. The sequence is that of Polyamine aminopropyltransferase from Alkalilimnicola ehrlichii (strain ATCC BAA-1101 / DSM 17681 / MLHE-1).